We begin with the raw amino-acid sequence, 146 residues long: uncharacterized protein (146 aa).

The chain crosses the membrane as a helical span at residues 6–26; the sequence is IPIFVISLSNISHIILAIFFF.

It localises to the membrane. This is an uncharacterized protein from Caenorhabditis elegans.